The chain runs to 536 residues: Membrane protein insertase YidC (536 aa).

Helical transmembrane passes span 7 to 27 (FFIFAFLFVSFLLWQAWQSQS), 338 to 358 (LLSTIHNFIGNWGFSIILITF), 419 to 439 (LPVFIQMPIFLSLYYMLIGSV), 453 to 473 (LSDQDPYYVLPIFMGLTMFFI), and 494 to 514 (PFIFTVFFLWFPSGLVLYYIV).

It belongs to the OXA1/ALB3/YidC family. Type 1 subfamily. As to quaternary structure, interacts with the Sec translocase complex via SecD. Specifically interacts with transmembrane segments of nascent integral membrane proteins during membrane integration.

Its subcellular location is the cell membrane. Its function is as follows. Required for the insertion and/or proper folding and/or complex formation of integral membrane proteins into the membrane. Involved in integration of membrane proteins that insert both dependently and independently of the Sec translocase complex, as well as at least some lipoproteins. Aids folding of multispanning membrane proteins. The protein is Membrane protein insertase YidC of Buchnera aphidicola subsp. Schizaphis graminum (strain Sg).